The primary structure comprises 699 residues: Elongation factor G (699 aa).

In terms of domain architecture, tr-type G spans 8 to 290 (NKYRNLGIMA…KVIELLPSPV (283 aa)). GTP contacts are provided by residues 17–24 (AHIDAGKT), 88–92 (DTPGH), and 142–145 (NKMD).

Belongs to the TRAFAC class translation factor GTPase superfamily. Classic translation factor GTPase family. EF-G/EF-2 subfamily.

The protein localises to the cytoplasm. Functionally, catalyzes the GTP-dependent ribosomal translocation step during translation elongation. During this step, the ribosome changes from the pre-translocational (PRE) to the post-translocational (POST) state as the newly formed A-site-bound peptidyl-tRNA and P-site-bound deacylated tRNA move to the P and E sites, respectively. Catalyzes the coordinated movement of the two tRNA molecules, the mRNA and conformational changes in the ribosome. This is Elongation factor G from Dichelobacter nodosus (strain VCS1703A).